The sequence spans 380 residues: Lipoyl synthase, mitochondrial (380 aa).

[4Fe-4S] cluster-binding residues include Cys-104, Cys-109, Cys-115, Cys-135, Cys-139, Cys-142, and Ser-350. In terms of domain architecture, Radical SAM core spans 120-339 (EHGTQTATIM…ETRGNELGFL (220 aa)).

The protein belongs to the radical SAM superfamily. Lipoyl synthase family. The cofactor is [4Fe-4S] cluster.

The protein localises to the mitochondrion. The catalysed reaction is [[Fe-S] cluster scaffold protein carrying a second [4Fe-4S](2+) cluster] + N(6)-octanoyl-L-lysyl-[protein] + 2 oxidized [2Fe-2S]-[ferredoxin] + 2 S-adenosyl-L-methionine + 4 H(+) = [[Fe-S] cluster scaffold protein] + N(6)-[(R)-dihydrolipoyl]-L-lysyl-[protein] + 4 Fe(3+) + 2 hydrogen sulfide + 2 5'-deoxyadenosine + 2 L-methionine + 2 reduced [2Fe-2S]-[ferredoxin]. It participates in protein modification; protein lipoylation via endogenous pathway; protein N(6)-(lipoyl)lysine from octanoyl-[acyl-carrier-protein]: step 2/2. Catalyzes the radical-mediated insertion of two sulfur atoms into the C-6 and C-8 positions of the octanoyl moiety bound to the lipoyl domains of lipoate-dependent enzymes, thereby converting the octanoylated domains into lipoylated derivatives. The chain is Lipoyl synthase, mitochondrial from Culex quinquefasciatus (Southern house mosquito).